Reading from the N-terminus, the 85-residue chain is Antitoxin VapB43 (85 aa).

Positions glycine 37 to arginine 60 are disordered.

Antitoxin component of a type II toxin-antitoxin (TA) system. The sequence is that of Antitoxin VapB43 (vapB43) from Mycobacterium tuberculosis (strain CDC 1551 / Oshkosh).